We begin with the raw amino-acid sequence, 132 residues long: Small ribosomal subunit protein uS8 (132 aa).

This sequence belongs to the universal ribosomal protein uS8 family. As to quaternary structure, part of the 30S ribosomal subunit. Contacts proteins S5 and S12.

One of the primary rRNA binding proteins, it binds directly to 16S rRNA central domain where it helps coordinate assembly of the platform of the 30S subunit. The protein is Small ribosomal subunit protein uS8 of Streptomyces coelicolor (strain ATCC BAA-471 / A3(2) / M145).